The following is a 306-amino-acid chain: Pantothenate kinase (306 aa).

An ATP-binding site is contributed by 90 to 97 (GSVAVGKS).

Belongs to the prokaryotic pantothenate kinase family.

The protein localises to the cytoplasm. It carries out the reaction (R)-pantothenate + ATP = (R)-4'-phosphopantothenate + ADP + H(+). It functions in the pathway cofactor biosynthesis; coenzyme A biosynthesis; CoA from (R)-pantothenate: step 1/5. The sequence is that of Pantothenate kinase from Lactococcus lactis subsp. cremoris (strain MG1363).